We begin with the raw amino-acid sequence, 673 residues long: Protein VirD3 (673 aa).

Disordered stretches follow at residues 36–73, 171–216, 229–409, 478–497, 520–552, and 585–673; these read VAGE…GRLG, SPVN…GTSV, ERDT…LRSS, RLNG…LEDF, EKGK…VTPL, and DSSR…GCGR. Composition is skewed to polar residues over residues 171 to 183, 193 to 216, 234 to 246, and 268 to 277; these read SPVN…SNWQ, VQPS…GTSV, SETT…TISS, and QSLSVTVTTP. Over residues 278-287 the composition is skewed to low complexity; sequence NSNAEASSHS. The segment covering 288-303 has biased composition (basic and acidic residues); it reads AHTETLDDVSSDRSSE. Composition is skewed to basic and acidic residues over residues 520 to 534 and 638 to 673; these read EKGK…DTRF and AAEH…GCGR.

This Agrobacterium fabrum (strain C58 / ATCC 33970) (Agrobacterium tumefaciens (strain C58)) protein is Protein VirD3 (virD3).